A 573-amino-acid chain; its full sequence is NADH-ubiquinone oxidoreductase chain 5 (573 aa).

A run of 16 helical transmembrane segments spans residues 4 to 24 (ISFINLISISLTCFLLSLYYL), 44 to 64 (IVMTFLFDWMSLLFMSFVLMI), 85 to 105 (FIMLVLMFVLSMMLLIISPNL), 106 to 126 (VSILLGWDGLGLVSYCLVIYF), 147 to 167 (VALLLAIAWMLNYGSWNYIFY), 170 to 190 (VMQNEFSMLMIGSLVMLAAMT), 212 to 234 (SALVHSSTLVTAGVYLLIRFNIV), 239 to 259 (WLGQLLLLLSGLTMFMAGLGA), 268 to 288 (IIALSTLSQLGLMMSILSMGF), 294 to 314 (FHLLTHALFKALLFMCAGAII), 337 to 357 (SACFNVSNLALCGMPFLAGFY), 377 to 396 (FLYFFSTGLTVSYSFRLVYY), 422 to 442 (LGLLFMSIIGGSMLNWLIFPF), 452 to 472 (LKMLTLFVCIVGGLFGYLISI), 487 to 507 (LTLFLGSMWFMPYISTYGMIF), and 552 to 572 (LKIYLMLFVFWIMILFSFLLF).

The protein belongs to the complex I subunit 5 family.

It is found in the mitochondrion inner membrane. It carries out the reaction a ubiquinone + NADH + 5 H(+)(in) = a ubiquinol + NAD(+) + 4 H(+)(out). Core subunit of the mitochondrial membrane respiratory chain NADH dehydrogenase (Complex I) that is believed to belong to the minimal assembly required for catalysis. Complex I functions in the transfer of electrons from NADH to the respiratory chain. The immediate electron acceptor for the enzyme is believed to be ubiquinone. The protein is NADH-ubiquinone oxidoreductase chain 5 (mt:ND5) of Drosophila yakuba (Fruit fly).